Reading from the N-terminus, the 246-residue chain is Ribonuclease PH (246 aa).

Residues Arg-91 and 129 to 131 (GTR) contribute to the phosphate site.

It belongs to the RNase PH family. In terms of assembly, homohexameric ring arranged as a trimer of dimers.

It carries out the reaction tRNA(n+1) + phosphate = tRNA(n) + a ribonucleoside 5'-diphosphate. In terms of biological role, phosphorolytic 3'-5' exoribonuclease that plays an important role in tRNA 3'-end maturation. Removes nucleotide residues following the 3'-CCA terminus of tRNAs; can also add nucleotides to the ends of RNA molecules by using nucleoside diphosphates as substrates, but this may not be physiologically important. Probably plays a role in initiation of 16S rRNA degradation (leading to ribosome degradation) during starvation. The protein is Ribonuclease PH of Burkholderia orbicola (strain MC0-3).